The following is a 114-amino-acid chain: C-X-C motif chemokine 5 (114 aa).

A signal peptide spans methionine 1–serine 36. 2 disulfide bridges follow: cysteine 49–cysteine 75 and cysteine 51–cysteine 91.

The protein belongs to the intercrine alpha (chemokine CxC) family. Monomer. Homodimer. Post-translationally, N-terminal processed forms ENA-78(8-78) and ENA-78(9-78) are produced by proteolytic cleavage after secretion from peripheral blood monocytes.

The protein resides in the secreted. Functionally, involved in neutrophil activation. In vitro, ENA-78(8-78) and ENA-78(9-78) show a threefold higher chemotactic activity for neutrophil granulocytes. In Homo sapiens (Human), this protein is C-X-C motif chemokine 5 (CXCL5).